A 381-amino-acid chain; its full sequence is Dual specificity protein phosphatase 6 (381 aa).

The Rhodanese domain occupies glycine 30–glutamate 148. Positions serine 176–glutamine 203 are disordered. Positions asparagine 189–glutamine 203 are enriched in polar residues. The region spanning phenylalanine 206–leucine 349 is the Tyrosine-protein phosphatase domain. Cysteine 293 serves as the catalytic Phosphocysteine intermediate.

It belongs to the protein-tyrosine phosphatase family. Non-receptor class dual specificity subfamily. Interacts with MAPK1/ERK2. Ubiquitinated by the SCF(FBXO31) complex, leading to its proteasomal degradation. Expressed in lung, heart, brain, and kidney, but not significantly in skeletal muscle or testis.

Its subcellular location is the cytoplasm. It catalyses the reaction O-phospho-L-tyrosyl-[protein] + H2O = L-tyrosyl-[protein] + phosphate. The catalysed reaction is O-phospho-L-seryl-[protein] + H2O = L-seryl-[protein] + phosphate. The enzyme catalyses O-phospho-L-threonyl-[protein] + H2O = L-threonyl-[protein] + phosphate. In terms of biological role, dual specificity protein phosphatase, which mediates dephosphorylation and inactivation of MAP kinases. Has a specificity for the ERK family. Implicated in muscle and neuronal differentiation. Plays an important role in alleviating chronic postoperative pain. Necessary for the normal dephosphorylation of the long-lasting phosphorylated forms of spinal MAPK1/3 and MAP kinase p38 induced by peripheral surgery, which drives the resolution of acute postoperative allodynia. Also important for dephosphorylation of MAPK1/3 in local wound tissue, which further contributes to resolution of acute pain. In Rattus norvegicus (Rat), this protein is Dual specificity protein phosphatase 6 (Dusp6).